Here is a 186-residue protein sequence, read N- to C-terminus: Lipid A palmitoyltransferase PagP (186 aa).

The N-terminal stretch at 1–25 is a signal peptide; sequence MNVSKYVAIFSFVFIQLISVGKVFA. Residues histidine 58, aspartate 101, and serine 102 contribute to the active site.

Belongs to the lipid A palmitoyltransferase family. Homodimer.

The protein resides in the cell outer membrane. The catalysed reaction is lipid A (E. coli) + a 1-hexadecanoyl-2-acyl-sn-glycero-3-phosphocholine = hepta-acyl lipid A (E. coli) + a 2-acyl-sn-glycero-3-phosphocholine. It catalyses the reaction lipid IIA + a 1-hexadecanoyl-2-acyl-sn-glycero-3-phosphocholine = lipid IIB + a 2-acyl-sn-glycero-3-phosphocholine. The enzyme catalyses lipid IVA (E. coli) + a 1-hexadecanoyl-2-acyl-sn-glycero-3-phosphocholine = lipid IVB (E. coli) + a 2-acyl-sn-glycero-3-phosphocholine. Functionally, transfers a palmitate residue from the sn-1 position of a phospholipid to the N-linked hydroxymyristate on the proximal unit of lipid A or its precursors. This Escherichia coli O157:H7 protein is Lipid A palmitoyltransferase PagP.